A 56-amino-acid polypeptide reads, in one-letter code: Conotoxin Cal6.41a (56 aa).

An N-terminal signal peptide occupies residues 1–23 (MSGSGAMLLGLLILVAMATSLDT). 3 disulfides stabilise this stretch: C27/C41, C33/C50, and C40/C54.

In terms of tissue distribution, expressed by the venom duct.

Its subcellular location is the secreted. In terms of biological role, probable neurotoxin. The protein is Conotoxin Cal6.41a of Californiconus californicus (California cone).